A 49-amino-acid chain; its full sequence is Small integral membrane protein 27 (49 aa).

The helical transmembrane segment at 11 to 31 threads the bilayer; sequence WTYSLLLLAIVLLSWGFVIYA.

The protein resides in the membrane. The chain is Small integral membrane protein 27 from Mus musculus (Mouse).